The sequence spans 473 residues: Phosphoglucosamine mutase (473 aa).

The Phosphoserine intermediate role is filled by Ser102. Residues Ser102, Asp248, Asp250, and Asp252 each coordinate Mg(2+). The residue at position 102 (Ser102) is a Phosphoserine.

Belongs to the phosphohexose mutase family. Requires Mg(2+) as cofactor. In terms of processing, activated by phosphorylation.

The enzyme catalyses alpha-D-glucosamine 1-phosphate = D-glucosamine 6-phosphate. In terms of biological role, catalyzes the conversion of glucosamine-6-phosphate to glucosamine-1-phosphate. The chain is Phosphoglucosamine mutase from Rhodospirillum centenum (strain ATCC 51521 / SW).